Reading from the N-terminus, the 709-residue chain is Golgin-84 (709 aa).

Residues 1 to 664 are Cytoplasmic-facing; it reads MASWLKVAED…RATRFLWRHP (664 aa). Disordered stretches follow at residues 24-132, 144-195, and 211-265; these read TELS…VVDR, EVEV…NQDA, and EVIH…DQLE. The span at 29–43 shows a compositional bias: low complexity; the sequence is EQSSPQPSGSSSQEG. The span at 78-89 shows a compositional bias: basic and acidic residues; that stretch reads PPRERIKIEKIR. Residues 94 to 113 are compositionally biased toward low complexity; the sequence is VDSSSVDASASKPDVSSSDV. Positions 114–132 are enriched in basic and acidic residues; it reads KGLDDDGGAEKEEKVVVDR. Over residues 162–180 the composition is skewed to low complexity; sequence DGAADSGNSEGAAESSAPS. 2 stretches are compositionally biased toward basic and acidic residues: residues 211–222 and 248–265; these read EVIHEKNIKEVP and QQEH…DQLE. A coiled-coil region spans residues 287–592; sequence RVCAGLSSRL…AALEFQLEKS (306 aa). A helical; Signal-anchor for type II membrane protein transmembrane segment spans residues 665 to 684; that stretch reads VARVSLLFYLVFVHLFLMYL. Residues 685–707 are Lumenal-facing; sequence MHRLQDFASREGPTAMGGLANSD.

The protein resides in the golgi apparatus membrane. In terms of biological role, may be involved in maintaining Golgi structure and in intra-Golgi transport. The protein is Golgin-84 of Oryza sativa subsp. japonica (Rice).